The sequence spans 590 residues: UvrABC system protein C (590 aa).

The GIY-YIG domain maps to 15–92 (DLPGCYMMKD…IQKHKPYYNI (78 aa)). The region spanning 197–232 (SKIKKELEQKMETASENLEFERAAEIRDQIHYVEMT) is the UVR domain.

The protein belongs to the UvrC family. As to quaternary structure, interacts with UvrB in an incision complex.

Its subcellular location is the cytoplasm. Its function is as follows. The UvrABC repair system catalyzes the recognition and processing of DNA lesions. UvrC both incises the 5' and 3' sides of the lesion. The N-terminal half is responsible for the 3' incision and the C-terminal half is responsible for the 5' incision. This Ligilactobacillus salivarius (strain UCC118) (Lactobacillus salivarius) protein is UvrABC system protein C.